A 122-amino-acid chain; its full sequence is Large ribosomal subunit protein uL14 (122 aa).

This sequence belongs to the universal ribosomal protein uL14 family. Part of the 50S ribosomal subunit. Forms a cluster with proteins L3 and L19. In the 70S ribosome, L14 and L19 interact and together make contacts with the 16S rRNA in bridges B5 and B8.

In terms of biological role, binds to 23S rRNA. Forms part of two intersubunit bridges in the 70S ribosome. The sequence is that of Large ribosomal subunit protein uL14 from Mesorhizobium japonicum (strain LMG 29417 / CECT 9101 / MAFF 303099) (Mesorhizobium loti (strain MAFF 303099)).